The following is a 143-amino-acid chain: Putative pre-16S rRNA nuclease (143 aa).

It belongs to the YqgF nuclease family.

Its subcellular location is the cytoplasm. Its function is as follows. Could be a nuclease involved in processing of the 5'-end of pre-16S rRNA. In Lactobacillus gasseri (strain ATCC 33323 / DSM 20243 / BCRC 14619 / CIP 102991 / JCM 1131 / KCTC 3163 / NCIMB 11718 / NCTC 13722 / AM63), this protein is Putative pre-16S rRNA nuclease.